We begin with the raw amino-acid sequence, 363 residues long: MNDIQLDQASVKKRPSGAYDATTRLAASWYVAMRSNELKDKPTELTLFGRPCVAWRGATGRAVVMDRHCSHLGANLADGRIKDGCIQCPFHHWRYDEQGQCVHIPGHNQAVRQLEPVPRGARQPTLVTAERYGYVWVWYGSPLPLHPLPEISAADVDNGDFMHLHFAFETTTAVLRIVENFYDAQHATPVHALPISAFELKLFDDWRQWPEVESLALAGAWFGAGIDFTVDRYFGPLGMLSRALGLNMSQMNLHFDGYPGGCVMTVALDGDVKYKLLQCVTPVSEGKNVMHMLISIKKVGGILRRATDFVLFGLQTRQAAGYDVKIWNGMKPDGGGAYSKYDKLVLKYRAFYRGWVDRVASER.

The 109-residue stretch at 29–137 folds into the Rieske domain; that stretch reads WYVAMRSNEL…TAERYGYVWV (109 aa). Residues Cys69, His71, Cys88, and His91 each contribute to the [2Fe-2S] cluster site.

As to quaternary structure, homodimer. [2Fe-2S] cluster serves as cofactor. Requires Fe cation as cofactor. It depends on FMN as a cofactor.

It catalyses the reaction aminopyrrolnitrin + NADPH + 2 O2 + H(+) = pyrrolnitrin + NADP(+) + 2 H2O. Its pathway is antibiotic biosynthesis. Functionally, involved in the biosynthesis of the antifungal antibiotic pyrrolnitrin (PRN). Catalyzes the oxidation of the amino group of aminopyrrolnitrin (APRN) to a nitro group to form PRN. It has high substrate specificity toward physiological substrate aminopyrrolnitrin, p-aminobenzylamine (pABA), p-aminobenzyl alcohol, and p-aminophenyl alanine. The chain is Aminopyrrolnitrin oxygenase PrnD (prnD) from Pseudomonas fluorescens.